The following is a 408-amino-acid chain: GTPase HflX (408 aa).

Residues P198–Y361 enclose the Hflx-type G domain. GTP-binding positions include G204–S211, F229–D233, D251–G254, N317–D320, and S339–K341. Residues S211 and T231 each coordinate Mg(2+).

The protein belongs to the TRAFAC class OBG-HflX-like GTPase superfamily. HflX GTPase family. Monomer. Associates with the 50S ribosomal subunit. Requires Mg(2+) as cofactor.

The protein resides in the cytoplasm. Functionally, GTPase that associates with the 50S ribosomal subunit and may have a role during protein synthesis or ribosome biogenesis. This is GTPase HflX from Spirochaeta thermophila (strain ATCC 49972 / DSM 6192 / RI 19.B1).